Reading from the N-terminus, the 149-residue chain is MKPLILVLNGPNLNMLGTREPAQYGHETLADLAQGCADTAHAHGLEIEFRQTNHEGELIDWIHAARGRCAGIVINPGAWTHTSVAIRDALVASELPVIEVHLSNVHKREPFRHLSFVSSIAVGVICGLGSHGYRMALSHFAELLQERAA.

Tyr-24 serves as the catalytic Proton acceptor. Residues Asn-75, His-81, and Asp-88 each contribute to the substrate site. His-101 functions as the Proton donor in the catalytic mechanism. Substrate contacts are provided by residues 102-103 (LS) and Arg-112.

This sequence belongs to the type-II 3-dehydroquinase family. As to quaternary structure, homododecamer.

The enzyme catalyses 3-dehydroquinate = 3-dehydroshikimate + H2O. It participates in metabolic intermediate biosynthesis; chorismate biosynthesis; chorismate from D-erythrose 4-phosphate and phosphoenolpyruvate: step 3/7. Its function is as follows. Catalyzes a trans-dehydration via an enolate intermediate. This chain is 3-dehydroquinate dehydratase 2 (aroQ2), found in Pseudomonas putida (strain ATCC 47054 / DSM 6125 / CFBP 8728 / NCIMB 11950 / KT2440).